We begin with the raw amino-acid sequence, 345 residues long: UDP-N-acetylenolpyruvoylglucosamine reductase (345 aa).

The 169-residue stretch at 25-193 folds into the FAD-binding PCMH-type domain; it reads LPAHCTDFVS…VGVTFLLPKA (169 aa). Arg-169 is an active-site residue. Ser-237 functions as the Proton donor in the catalytic mechanism. Residue Glu-333 is part of the active site.

Belongs to the MurB family. Requires FAD as cofactor.

Its subcellular location is the cytoplasm. The catalysed reaction is UDP-N-acetyl-alpha-D-muramate + NADP(+) = UDP-N-acetyl-3-O-(1-carboxyvinyl)-alpha-D-glucosamine + NADPH + H(+). It functions in the pathway cell wall biogenesis; peptidoglycan biosynthesis. Its function is as follows. Cell wall formation. The sequence is that of UDP-N-acetylenolpyruvoylglucosamine reductase from Pseudoalteromonas atlantica (strain T6c / ATCC BAA-1087).